A 62-amino-acid polypeptide reads, in one-letter code: Antitoxin VbhA (62 aa).

An Inhibitory (S/T)XXXE(G/N) motif motif is present at residues Ser-20–Gly-25. Residue Glu-24 coordinates ATP.

In terms of assembly, interacts with VbhT.

In terms of biological role, antitoxin component of type II toxin-antitoxin (TA) system VbhT-VbhA. Acts by inhibiting the adenylyltransferase activity of VbhT; competes with ATP-binding and prevents productive ATP-binding to VbhT. The polypeptide is Antitoxin VbhA (Bartonella schoenbuchensis (strain DSM 13525 / NCTC 13165 / R1)).